The chain runs to 319 residues: Transcription factor VBP (319 aa).

Low complexity-rich tracts occupy residues 1–31 and 143–158; these read MPGRAAHQEAAAAGGAAAEPTAAGGSAGAVA and ASASTGSPVSSSSTAV. Disordered stretches follow at residues 1–35 and 139–186; these read MPGRAAHQEAAAAGGAAAEPTAAGGSAGAVAQQPE and EKEP…DPDC. The segment covering 159-180 has biased composition (polar residues); the sequence is YQQSEAASSTESPPQNERNTPS. Residues 243–306 enclose the bZIP domain; that stretch reads DEKYWTRRKK…GRCKNIVSKY (64 aa). Positions 245–265 are basic motif; sequence KYWTRRKKNNVAAKRSRDARR. The interval 266–273 is leucine-zipper; it reads LKENQITI.

The protein belongs to the bZIP family. PAR subfamily. Binds DNA as a homodimer or a heterodimer. Exists as a stable dimer in the absence of DNA. Isoform 1 and isoform 3 are expressed in a variety of somatic tissues, including liver, heart, intestine, stomach and kidney. Both isoforms are also expressed in hepatoma (LMH) cells and in embryonic fibroblast cell lines. Isoform 2 and isoform 4 are expressed in adult heart and intestine.

The protein localises to the nucleus. Transcription factor that binds to and transactivates the vitellogenin II (VTG2) promoter. Binds to the palindromic sequence 5'-GTTTACATAAAC-3'. The protein is Transcription factor VBP (TEF) of Gallus gallus (Chicken).